We begin with the raw amino-acid sequence, 211 residues long: ATP-dependent Clp protease proteolytic subunit (211 aa).

The active-site Nucleophile is the S107. Residue H132 is part of the active site.

Belongs to the peptidase S14 family. As to quaternary structure, fourteen ClpP subunits assemble into 2 heptameric rings which stack back to back to give a disk-like structure with a central cavity, resembling the structure of eukaryotic proteasomes.

The protein localises to the cytoplasm. It carries out the reaction Hydrolysis of proteins to small peptides in the presence of ATP and magnesium. alpha-casein is the usual test substrate. In the absence of ATP, only oligopeptides shorter than five residues are hydrolyzed (such as succinyl-Leu-Tyr-|-NHMec, and Leu-Tyr-Leu-|-Tyr-Trp, in which cleavage of the -Tyr-|-Leu- and -Tyr-|-Trp bonds also occurs).. In terms of biological role, cleaves peptides in various proteins in a process that requires ATP hydrolysis. Has a chymotrypsin-like activity. Plays a major role in the degradation of misfolded proteins. The polypeptide is ATP-dependent Clp protease proteolytic subunit (Xanthobacter autotrophicus (strain ATCC BAA-1158 / Py2)).